The sequence spans 239 residues: Putative HTH-type transcriptional regulator YkgA (239 aa).

Positions 19 to 117 (QQLLEWIECN…GCSPREYRHR (99 aa)) constitute an HTH araC/xylS-type domain. DNA-binding regions (H-T-H motif) lie at residues 36–57 (EDIA…RNFM) and 84–107 (MLDI…KKLF).

This chain is Putative HTH-type transcriptional regulator YkgA (ykgA), found in Escherichia coli (strain K12).